Here is a 749-residue protein sequence, read N- to C-terminus: MIIINKYIRMNKIAILFSFFILICCTGYSISYKINGINENKVLSLSSSPSPSSSSSSSQILEKGKEEIKKIKKTNKNKLLYNVAIVDLEPKLEIEQELLTRNNKKKMEMKEEMDIAMMMMKAADRTDQVSTSSSSSSFSEENKKSSSDDSAPAIQSNLTFSGYMTGGEQVCDPKSCNSPSVFTQNYLCNTSSAWANGYVFHDPVPPTGLFVVHKIVVTFTGMFNVIPPTSMVFSLVNGEENAGIFFISKSSPSQCPNCQISFSPRTLPDVDPNGLASYRYGSNNSIIFNLFETDVACIGKVTANIFYGPVAFKVNSVVPNTAPSTGGETVYFIGEQFYQSSQIQCKFGTVISTGTYINSTCASCVVPPMLQSNSTTPSDYNVTIQLSEDGGSSFCLNTTFFIYTAASIPFVKPTSPNYQKIIYIVVGVGIAVLLIIAVGIYFIIRLRIKNKRLNGSKHALPIGINDDERSPLLKTDYKTLFEIKPIDISEIVVQNRIGRGSCAEVFTGTWRGIIVAIKKAKLLNEDDEDFLNELAQEATIMSQLRHPNICQFLGTCNNPPEILIVMEYMPLGSLYRILHDPSISLDWPRMKSMALDIAKGMNYLHCCDPIVIHRDLKSHNLLVDEHYRVKISDFGLSTRFKKHLDKKTAMTPVGTPCWTAPEVLRNDPYTEKADVFSFAIVLWEIVTREDPYQGMPTFQIVISVGQHKLRPIVPPQVSAPFTRLITECWSEDPQQRPSFQEIVKRLEAM.

The N-terminal stretch at methionine 1–serine 31 is a signal peptide. Residues tyrosine 32 to tyrosine 423 lie on the Extracellular side of the membrane. Positions aspartate 124–alanine 153 are disordered. Residues serine 130–serine 139 show a composition bias toward low complexity. N-linked (GlcNAc...) asparagine glycosylation is found at asparagine 157, asparagine 189, asparagine 283, asparagine 358, asparagine 373, asparagine 381, and asparagine 397. A helical membrane pass occupies residues isoleucine 424–isoleucine 444. Residues arginine 445 to methionine 749 are Cytoplasmic-facing. The Protein kinase domain occupies isoleucine 491–methionine 749. ATP is bound by residues isoleucine 497–valine 505 and lysine 518. Aspartate 615 functions as the Proton acceptor in the catalytic mechanism.

It belongs to the protein kinase superfamily. TKL Ser/Thr protein kinase family.

The protein resides in the membrane. It catalyses the reaction L-seryl-[protein] + ATP = O-phospho-L-seryl-[protein] + ADP + H(+). The enzyme catalyses L-threonyl-[protein] + ATP = O-phospho-L-threonyl-[protein] + ADP + H(+). The polypeptide is Probable serine/threonine-protein kinase drkC (drkC) (Dictyostelium discoideum (Social amoeba)).